The following is a 718-amino-acid chain: Protein Smaug homolog 1 (718 aa).

At Ser-168 the chain carries Phosphoserine. A disordered region spans residues 278 to 310 (ARGPQCLPSDHAPLSPQSSVASSGSGGSEHLED). Positions 323 to 396 (SGMKDVPAWL…LKSLERDIIE (74 aa)) constitute an SAM domain. Disordered regions lie at residues 417-474 (AYGS…LQPH) and 572-601 (NRGFGQSDSLPTAGSMGSGMGRRNPRQYQI). At Ser-420 the chain carries Phosphoserine. Residue Thr-424 is modified to Phosphothreonine. The segment covering 453-466 (GATATGATATPSAG) has biased composition (low complexity). At Arg-573 the chain carries Omega-N-methylarginine. Phosphoserine is present on Ser-580.

This sequence belongs to the SMAUG family.

The protein localises to the cytoplasm. It localises to the cell projection. Its subcellular location is the dendrite. The protein resides in the synapse. It is found in the synaptosome. Acts as a translational repressor of SRE-containing messengers. The protein is Protein Smaug homolog 1 (SAMD4A) of Macaca fascicularis (Crab-eating macaque).